Here is a 345-residue protein sequence, read N- to C-terminus: Hydroxymethylglutaryl-CoA synthase (345 aa).

Asp-28 is a binding site for (3S)-3-hydroxy-3-methylglutaryl-CoA. Glu-80 (proton donor/acceptor) is an active-site residue. Residues Cys-112 and Thr-153 each coordinate (3S)-3-hydroxy-3-methylglutaryl-CoA. Residue Cys-112 is the Acyl-thioester intermediate of the active site. Arg-199 lines the CoA pocket. Thr-201 and His-234 together coordinate (3S)-3-hydroxy-3-methylglutaryl-CoA. The Proton donor/acceptor role is filled by His-234. Lys-239 provides a ligand contact to CoA. (3S)-3-hydroxy-3-methylglutaryl-CoA is bound by residues Arg-243, Asn-266, and Ser-296.

This sequence belongs to the thiolase-like superfamily. Archaeal HMG-CoA synthase family. Interacts with acetoacetyl-CoA thiolase that catalyzes the precedent step in the pathway and with a DUF35 protein. The acetoacetyl-CoA thiolase/HMG-CoA synthase complex channels the intermediate via a fused CoA-binding site, which allows for efficient coupling of the endergonic thiolase reaction with the exergonic HMGCS reaction.

It catalyses the reaction acetoacetyl-CoA + acetyl-CoA + H2O = (3S)-3-hydroxy-3-methylglutaryl-CoA + CoA + H(+). It participates in metabolic intermediate biosynthesis; (R)-mevalonate biosynthesis; (R)-mevalonate from acetyl-CoA: step 2/3. Its function is as follows. Catalyzes the condensation of acetyl-CoA with acetoacetyl-CoA to form 3-hydroxy-3-methylglutaryl-CoA (HMG-CoA). Functions in the mevalonate (MVA) pathway leading to isopentenyl diphosphate (IPP), a key precursor for the biosynthesis of isoprenoid compounds that are building blocks of archaeal membrane lipids. The chain is Hydroxymethylglutaryl-CoA synthase from Methanobrevibacter smithii (strain ATCC 35061 / DSM 861 / OCM 144 / PS).